Consider the following 508-residue polypeptide: Photosystem II CP47 reaction center protein (508 aa).

The next 6 helical transmembrane spans lie at 21-36 (AVHI…WAGS), 101-115 (IVFS…IWHW), 140-156 (GIHL…FGAF), 203-218 (IAAG…FHLS), 237-252 (VLSS…AFVV), and 457-472 (TFAL…HGAR).

The protein belongs to the PsbB/PsbC family. PsbB subfamily. As to quaternary structure, PSII is composed of 1 copy each of membrane proteins PsbA, PsbB, PsbC, PsbD, PsbE, PsbF, PsbH, PsbI, PsbJ, PsbK, PsbL, PsbM, PsbT, PsbX, PsbY, PsbZ, Psb30/Ycf12, at least 3 peripheral proteins of the oxygen-evolving complex and a large number of cofactors. It forms dimeric complexes. The cofactor is Binds multiple chlorophylls. PSII binds additional chlorophylls, carotenoids and specific lipids..

The protein resides in the plastid. Its subcellular location is the chloroplast thylakoid membrane. Its function is as follows. One of the components of the core complex of photosystem II (PSII). It binds chlorophyll and helps catalyze the primary light-induced photochemical processes of PSII. PSII is a light-driven water:plastoquinone oxidoreductase, using light energy to abstract electrons from H(2)O, generating O(2) and a proton gradient subsequently used for ATP formation. This chain is Photosystem II CP47 reaction center protein, found in Brachypodium distachyon (Purple false brome).